A 557-amino-acid chain; its full sequence is Dihydroxy-acid dehydratase (557 aa).

C50 serves as a coordination point for [2Fe-2S] cluster. D82 contributes to the Mg(2+) binding site. Residue C123 participates in [2Fe-2S] cluster binding. 2 residues coordinate Mg(2+): D124 and K125. An N6-carboxylysine modification is found at K125. C195 lines the [2Fe-2S] cluster pocket. E447 contributes to the Mg(2+) binding site. The active-site Proton acceptor is S473.

This sequence belongs to the IlvD/Edd family. Homodimer. The cofactor is [2Fe-2S] cluster. Mg(2+) is required as a cofactor.

It carries out the reaction (2R)-2,3-dihydroxy-3-methylbutanoate = 3-methyl-2-oxobutanoate + H2O. It catalyses the reaction (2R,3R)-2,3-dihydroxy-3-methylpentanoate = (S)-3-methyl-2-oxopentanoate + H2O. The protein operates within amino-acid biosynthesis; L-isoleucine biosynthesis; L-isoleucine from 2-oxobutanoate: step 3/4. It participates in amino-acid biosynthesis; L-valine biosynthesis; L-valine from pyruvate: step 3/4. Its function is as follows. Functions in the biosynthesis of branched-chain amino acids. Catalyzes the dehydration of (2R,3R)-2,3-dihydroxy-3-methylpentanoate (2,3-dihydroxy-3-methylvalerate) into 2-oxo-3-methylpentanoate (2-oxo-3-methylvalerate) and of (2R)-2,3-dihydroxy-3-methylbutanoate (2,3-dihydroxyisovalerate) into 2-oxo-3-methylbutanoate (2-oxoisovalerate), the penultimate precursor to L-isoleucine and L-valine, respectively. The protein is Dihydroxy-acid dehydratase of Nitrosomonas europaea (strain ATCC 19718 / CIP 103999 / KCTC 2705 / NBRC 14298).